A 254-amino-acid polypeptide reads, in one-letter code: Ribosomal RNA small subunit methyltransferase G (254 aa).

Residues Gly84, Phe89, 136 to 137 (VE), and Arg155 contribute to the S-adenosyl-L-methionine site. Residues 231–254 (HLYPRAVGIPSKQPLGIQADDNRS) form a disordered region.

It belongs to the methyltransferase superfamily. RNA methyltransferase RsmG family.

It is found in the cytoplasm. Functionally, specifically methylates the N7 position of a guanine in 16S rRNA. This chain is Ribosomal RNA small subunit methyltransferase G, found in Synechococcus sp. (strain WH7803).